The primary structure comprises 338 residues: Lipoate-protein ligase A (338 aa).

The 188-residue stretch at 29–216 (PATQRVLFLW…AFFAHYGERV (188 aa)) folds into the BPL/LPL catalytic domain. Residues R71, 76–79 (GAVF), and K134 each bind ATP. K134 serves as a coordination point for (R)-lipoate.

Belongs to the LplA family. In terms of assembly, monomer.

Its subcellular location is the cytoplasm. The catalysed reaction is L-lysyl-[lipoyl-carrier protein] + (R)-lipoate + ATP = N(6)-[(R)-lipoyl]-L-lysyl-[lipoyl-carrier protein] + AMP + diphosphate + H(+). It functions in the pathway protein modification; protein lipoylation via exogenous pathway; protein N(6)-(lipoyl)lysine from lipoate: step 1/2. The protein operates within protein modification; protein lipoylation via exogenous pathway; protein N(6)-(lipoyl)lysine from lipoate: step 2/2. In terms of biological role, catalyzes both the ATP-dependent activation of exogenously supplied lipoate to lipoyl-AMP and the transfer of the activated lipoyl onto the lipoyl domains of lipoate-dependent enzymes. This Escherichia coli O6:H1 (strain CFT073 / ATCC 700928 / UPEC) protein is Lipoate-protein ligase A.